Reading from the N-terminus, the 429-residue chain is Enolase (429 aa).

Glutamine 163 is a (2R)-2-phosphoglycerate binding site. Glutamate 205 serves as the catalytic Proton donor. Aspartate 242, glutamate 285, and aspartate 312 together coordinate Mg(2+). Positions 337, 366, 367, and 388 each coordinate (2R)-2-phosphoglycerate. Residue lysine 337 is the Proton acceptor of the active site.

This sequence belongs to the enolase family. Mg(2+) is required as a cofactor.

Its subcellular location is the cytoplasm. It is found in the secreted. It localises to the cell surface. It catalyses the reaction (2R)-2-phosphoglycerate = phosphoenolpyruvate + H2O. The protein operates within carbohydrate degradation; glycolysis; pyruvate from D-glyceraldehyde 3-phosphate: step 4/5. Its function is as follows. Catalyzes the reversible conversion of 2-phosphoglycerate (2-PG) into phosphoenolpyruvate (PEP). It is essential for the degradation of carbohydrates via glycolysis. The sequence is that of Enolase from Methylorubrum extorquens (strain CM4 / NCIMB 13688) (Methylobacterium extorquens).